A 470-amino-acid chain; its full sequence is 5-hydroxytryptamine receptor 2A (470 aa).

A disordered region spans residues 1 to 23 (MDVLFEDNAPLSPTTSSLMPSNG). Residues 1 to 80 (MDVLFEDNAP…LQEKNWSALL (80 aa)) are Extracellular-facing. The span at 10–21 (PLSPTTSSLMPS) shows a compositional bias: low complexity. Asn-38, Asn-44, Asn-51, and Asn-54 each carry an N-linked (GlcNAc...) asparagine glycan. The chain crosses the membrane as a helical span at residues 81–97 (TAVVIILTIAGNILVIM). At 98–111 (AVSLEKKLQNATNY) the chain is on the cytoplasmic side. The helical transmembrane segment at 112–137 (FLMSLAIADMLLGFLVMPVSMLTILY) threads the bilayer. The Extracellular portion of the chain corresponds to 138–146 (GYRWPLPSK). A helical transmembrane segment spans residues 147-171 (LCAVWIYLDVLFSTASIMHLCAISL). The cysteines at positions 148 and 227 are disulfide-linked. Asp-155 is a serotonin binding site. The short motif at 172-174 (DRY) is the DRY motif; important for ligand-induced conformation changes element. Residues 172 to 191 (DRYVAIQNPIHHSRFNSRTK) are Cytoplasmic-facing. A helical membrane pass occupies residues 192 to 215 (AFLKIIAVWTISVGISMPIPVFGL). The Extracellular portion of the chain corresponds to 216-232 (QDDSKVFKEGSCLLADD). The chain crosses the membrane as a helical span at residues 233-258 (NFVLIGSFVSFFIPLTIMVITYFLTI). At 259–321 (KSLQKEATLC…QSISNEQKAC (63 aa)) the chain is on the cytoplasmic side. Ser-280 carries the phosphoserine modification. The helical transmembrane segment at 322 to 347 (KVLGIVFFLFVVMWCPFFITNIMAVI) threads the bilayer. Residue Asn-342 participates in serotonin binding. An intrachain disulfide couples Cys-348 to Cys-352. The Extracellular portion of the chain corresponds to 348 to 355 (CKESCNED). Residues 356-381 (IIGALLNVFVWIGYLSSAVNPLVYTL) form a helical membrane-spanning segment. Residues 375–379 (NPLVY) carry the NPxxY motif; important for ligand-induced conformation changes and signaling motif. At 382–470 (FNKTYRSAFS…NTVNEKVSCV (89 aa)) the chain is on the cytoplasmic side. Positions 468-470 (SCV) match the PDZ-binding motif.

It belongs to the G-protein coupled receptor 1 family. Interacts (via C-terminus) with MPDZ and PATJ. May interact (via C-terminus) with MPP3, PRDX6, DLG4, DLG1, CASK, APBA1 and MAGI2. Interacts with GRM2 and DRD2; this may affect signaling. In terms of tissue distribution, ubiquitous.

The protein resides in the cell membrane. It localises to the cell projection. It is found in the dendrite. Its subcellular location is the axon. The protein localises to the cytoplasmic vesicle. The protein resides in the membrane. It localises to the caveola. It is found in the presynapse. Its activity is regulated as follows. G-protein coupled receptor activity is regulated by lipids: oleamide increases HTR2A-mediated activity. G-protein coupled receptor for 5-hydroxytryptamine (serotonin). Also functions as a receptor for various drugs and psychoactive substances, including mescaline, psilocybin, 1-(2,5-dimethoxy-4-iodophenyl)-2-aminopropane (DOI) and lysergic acid diethylamide (LSD). Ligand binding causes a conformation change that triggers signaling via guanine nucleotide-binding proteins (G proteins) and modulates the activity of downstream effectors. HTR2A is coupled to G(q)/G(11) G alpha proteins and activates phospholipase C-beta, releasing diacylglycerol (DAG) and inositol 1,4,5-trisphosphate (IP3) second messengers that modulate the activity of phosphatidylinositol 3-kinase and promote the release of Ca(2+) ions from intracellular stores, respectively. Beta-arrestin family members inhibit signaling via G proteins and mediate activation of alternative signaling pathways. Affects neural activity, perception, cognition and mood. Plays a role in the regulation of behavior, including responses to anxiogenic situations and psychoactive substances. Plays a role in intestinal smooth muscle contraction, and may play a role in arterial vasoconstriction. The polypeptide is 5-hydroxytryptamine receptor 2A (HTR2A) (Canis lupus familiaris (Dog)).